We begin with the raw amino-acid sequence, 257 residues long: 5'-nucleotidase SurE (257 aa).

Positions 8, 9, 40, and 92 each coordinate a divalent metal cation.

The protein belongs to the SurE nucleotidase family. It depends on a divalent metal cation as a cofactor.

The protein localises to the cytoplasm. The catalysed reaction is a ribonucleoside 5'-phosphate + H2O = a ribonucleoside + phosphate. Functionally, nucleotidase that shows phosphatase activity on nucleoside 5'-monophosphates. This Rhizobium rhizogenes (strain K84 / ATCC BAA-868) (Agrobacterium radiobacter) protein is 5'-nucleotidase SurE.